Consider the following 222-residue polypeptide: GTP cyclohydrolase 1 (222 aa).

3 residues coordinate Zn(2+): Cys111, His114, and Cys182.

This sequence belongs to the GTP cyclohydrolase I family. In terms of assembly, toroid-shaped homodecamer, composed of two pentamers of five dimers.

It catalyses the reaction GTP + H2O = 7,8-dihydroneopterin 3'-triphosphate + formate + H(+). Its pathway is cofactor biosynthesis; 7,8-dihydroneopterin triphosphate biosynthesis; 7,8-dihydroneopterin triphosphate from GTP: step 1/1. In Salmonella choleraesuis (strain SC-B67), this protein is GTP cyclohydrolase 1.